The chain runs to 119 residues: Large ribosomal subunit protein uL18 (119 aa).

The protein belongs to the universal ribosomal protein uL18 family. In terms of assembly, part of the 50S ribosomal subunit; part of the 5S rRNA/L5/L18/L25 subcomplex. Contacts the 5S and 23S rRNAs.

Its function is as follows. This is one of the proteins that bind and probably mediate the attachment of the 5S RNA into the large ribosomal subunit, where it forms part of the central protuberance. This Anaeromyxobacter dehalogenans (strain 2CP-C) protein is Large ribosomal subunit protein uL18.